The sequence spans 155 residues: uncharacterized protein (155 aa).

2 disordered regions span residues 24–63 (RVGYKEGPTVETKKIQPQLPDEDGNHSDKEDEQPQVVVLK) and 80–155 (KAAK…DENE). Ser-50 is subject to Phosphoserine. An N6-acetyllysine modification is found at Lys-108. Polar residues predominate over residues 128–147 (KQSSVRKNSQKQIKNSSLLS). 3 positions are modified to phosphoserine: Ser-130, Ser-147, and Ser-150.

This is an uncharacterized protein from Mus musculus (Mouse).